We begin with the raw amino-acid sequence, 239 residues long: Ribosomal RNA small subunit methyltransferase G (239 aa).

Residues glycine 78, phenylalanine 83, 129–130, and arginine 148 each bind S-adenosyl-L-methionine; that span reads AE.

It belongs to the methyltransferase superfamily. RNA methyltransferase RsmG family.

The protein localises to the cytoplasm. In terms of biological role, specifically methylates the N7 position of a guanine in 16S rRNA. This is Ribosomal RNA small subunit methyltransferase G from Clostridium botulinum (strain Kyoto / Type A2).